The sequence spans 341 residues: Basic membrane protein B (341 aa).

The signal sequence occupies residues 1–14; that stretch reads MRIVIFIFGILLTS. A lipid anchor (N-palmitoyl cysteine) is attached at Cys-15. A lipid anchor (S-diacylglycerol cysteine) is attached at Cys-15.

The protein belongs to the BMP lipoprotein family. Monomer.

Its subcellular location is the cell inner membrane. Its function is as follows. May be part of an ABC-type nucleoside uptake system involved in the purine salvage pathway. The protein is Basic membrane protein B (bmpB) of Borreliella burgdorferi (strain ATCC 35210 / DSM 4680 / CIP 102532 / B31) (Borrelia burgdorferi).